A 459-amino-acid polypeptide reads, in one-letter code: Cysteine--tRNA ligase (459 aa).

Cysteine 27 is a Zn(2+) binding site. Residues 29 to 39 (VTVYDDCHIGH) carry the 'HIGH' region motif. Zn(2+) contacts are provided by cysteine 208, histidine 233, and glutamate 237. Positions 265–269 (KMSKS) match the 'KMSKS' region motif. Position 268 (lysine 268) interacts with ATP.

This sequence belongs to the class-I aminoacyl-tRNA synthetase family. Monomer. Requires Zn(2+) as cofactor.

The protein resides in the cytoplasm. The enzyme catalyses tRNA(Cys) + L-cysteine + ATP = L-cysteinyl-tRNA(Cys) + AMP + diphosphate. The sequence is that of Cysteine--tRNA ligase from Francisella tularensis subsp. novicida (strain U112).